A 72-amino-acid polypeptide reads, in one-letter code: Small proline-rich protein 2B (72 aa).

The span at 1 to 11 (MSYQQQQCKQP) shows a compositional bias: low complexity. Residues 1-20 (MSYQQQQCKQPCQPPPVCPT) form a disordered region. 3 tandem repeats follow at residues 21-29 (PKCPEPCPP), 30-38 (PKCPEPCPP), and 39-47 (PKCPQPCPP). Residues 21-47 (PKCPEPCPPPKCPEPCPPPKCPQPCPP) form a 3 X 9 AA tandem repeats of P-K-C-P-[EQ]-P-C-P-P region. The disordered stretch occupies residues 42-72 (PQPCPPQQCQQKYPPVTPSPPCQPKYPPKSK). The segment covering 56–72 (PVTPSPPCQPKYPPKSK) has biased composition (pro residues).

Belongs to the cornifin (SPRR) family. As to expression, suprabasal layers of squamous-differentiated tissues such as epidermis, esophagus, tongue and trachea.

The protein localises to the cytoplasm. Functionally, cross-linked envelope protein of keratinocytes. It is a keratinocyte protein that first appears in the cell cytosol, but ultimately becomes cross-linked to membrane proteins by transglutaminase. All that results in the formation of an insoluble envelope beneath the plasma membrane. The polypeptide is Small proline-rich protein 2B (SPRR2B) (Homo sapiens (Human)).